The chain runs to 314 residues: Ribosomal protein L11 methyltransferase (314 aa).

Positions 152, 184, 206, and 248 each coordinate S-adenosyl-L-methionine.

It belongs to the methyltransferase superfamily. PrmA family.

It is found in the cytoplasm. It carries out the reaction L-lysyl-[protein] + 3 S-adenosyl-L-methionine = N(6),N(6),N(6)-trimethyl-L-lysyl-[protein] + 3 S-adenosyl-L-homocysteine + 3 H(+). Its function is as follows. Methylates ribosomal protein L11. This chain is Ribosomal protein L11 methyltransferase, found in Geotalea daltonii (strain DSM 22248 / JCM 15807 / FRC-32) (Geobacter daltonii).